We begin with the raw amino-acid sequence, 404 residues long: Snake venom metalloproteinase H5 (404 aa).

An N-terminal signal peptide occupies residues 1–6; that stretch reads FPYQGS. The propeptide occupies 7-177; the sequence is SIMLESGKVN…KPSWVNLTPK (171 aa). The 196-residue stretch at 184-379 folds into the Peptidase M12B domain; sequence TSVNLQLVVD…KKPKCIHKKS (196 aa). Cystine bridges form between cysteine 295–cysteine 374, cysteine 336–cysteine 358, and cysteine 338–cysteine 341. Histidine 320 is a binding site for Zn(2+). Glutamate 321 is a catalytic residue. Histidine 324 and histidine 330 together coordinate Zn(2+). The propeptide occupies 379–404; sequence SLKTDTVSTSVSGNEPLDDNVDGFHA. Residues 385–404 form a disordered region; the sequence is VSTSVSGNEPLDDNVDGFHA. Positions 394–404 are enriched in acidic residues; it reads PLDDNVDGFHA.

In terms of assembly, monomer. Requires Zn(2+) as cofactor. As to expression, expressed by the venom gland.

It is found in the secreted. Functionally, this probable venom zinc protease is not hemorrhagic when 3 ug are injected onto the back skin of guinea pig. This chain is Snake venom metalloproteinase H5, found in Deinagkistrodon acutus (Hundred-pace snake).